A 226-amino-acid chain; its full sequence is Phosphoglycolate phosphatase (226 aa).

Catalysis depends on D9, which acts as the Nucleophile. D9 and D11 together coordinate Mg(2+). K150 serves as a coordination point for substrate. Mg(2+) contacts are provided by D173 and D177.

Belongs to the archaeal SPP-like hydrolase family. Requires Mg(2+) as cofactor.

It catalyses the reaction 2-phosphoglycolate + H2O = glycolate + phosphate. Its function is as follows. Catalyzes the dephosphorylation of 2-phosphoglycolate. The protein is Phosphoglycolate phosphatase of Methanosarcina acetivorans (strain ATCC 35395 / DSM 2834 / JCM 12185 / C2A).